A 210-amino-acid polypeptide reads, in one-letter code: Neurotrophin-4 (210 aa).

An N-terminal signal peptide occupies residues 1–24; it reads MLPLPSCSLPILLLFLLPSVPIES. A propeptide spanning residues 25-80 is cleaved from the precursor; the sequence is QPPPSTLPPFLAPEWDLLSPRVVLSRGAPAGPPLLFLLEAGAFRESAGAPANRSRR. The N-linked (GlcNAc...) asparagine glycan is linked to Asn76. Disulfide bonds link Cys97–Cys170, Cys141–Cys199, and Cys158–Cys201.

Belongs to the NGF-beta family. In terms of tissue distribution, highest levels in prostate, lower levels in thymus, placenta, and skeletal muscle. Expressed in embryonic and adult tissues.

The protein resides in the secreted. Functionally, target-derived survival factor for peripheral sensory sympathetic neurons. May promote ameloblast differentiation and subsequent reduction in proliferation of ameloblasts. This chain is Neurotrophin-4 (NTF4), found in Homo sapiens (Human).